We begin with the raw amino-acid sequence, 31 residues long: NLYQFKNMIECAGTRTWIAYVKYGAYTYAYT.

The protein belongs to the phospholipase A2 family. Group I subfamily. The cofactor is Ca(2+). As to expression, expressed by the venom gland.

It is found in the secreted. It catalyses the reaction a 1,2-diacyl-sn-glycero-3-phosphocholine + H2O = a 1-acyl-sn-glycero-3-phosphocholine + a fatty acid + H(+). Functionally, snake venom phospholipase A2 (PLA2) that inhibits neuromuscular transmission by blocking acetylcholine release from the nerve termini. PLA2 catalyzes the calcium-dependent hydrolysis of the 2-acyl groups in 3-sn-phosphoglycerides. The protein is Basic phospholipase A2 13 of Bungarus fasciatus (Banded krait).